A 56-amino-acid polypeptide reads, in one-letter code: MYFEIYKDAKGEYRWRLKAANHEIIAQGEGYTSKQNCQHAVDLLKSTTAATPVKEV.

It belongs to the UPF0339 family.

This chain is UPF0339 protein NMA1193/NMA1859, found in Neisseria meningitidis serogroup A / serotype 4A (strain DSM 15465 / Z2491).